Reading from the N-terminus, the 103-residue chain is Cell division suppressor protein YneA (103 aa).

The 52-residue stretch at valine 36–leucine 87 folds into the LysM domain.

Belongs to the YneA family.

The protein resides in the cytoplasm. In terms of biological role, inhibits cell division during the SOS response. Affects a later stage of the cell division protein assembly, after the assembly of the Z ring, by probably suppressing recruitment of FtsL and/or DivIC to the division machinery. This Bacillus velezensis (strain DSM 23117 / BGSC 10A6 / LMG 26770 / FZB42) (Bacillus amyloliquefaciens subsp. plantarum) protein is Cell division suppressor protein YneA.